The chain runs to 175 residues: Major pollen allergen Pha a 5.4 (175 aa).

The protein belongs to the Poa p IX/Phl p VI allergen family.

In Phalaris aquatica (Canary grass), this protein is Major pollen allergen Pha a 5.4.